The following is a 550-amino-acid chain: Selinene synthase (550 aa).

Residues aspartate 314, aspartate 318, aspartate 450, and glutamate 458 each coordinate Mg(2+). The DDXXD motif motif lies at 314–318; the sequence is DDIYD.

It belongs to the terpene synthase family. The cofactor is Mg(2+). Mn(2+) serves as cofactor.

It carries out the reaction (2E,6E)-farnesyl diphosphate = (+)-beta-selinene + diphosphate. It catalyses the reaction (2E,6E)-farnesyl diphosphate = alpha-selinene + diphosphate. Its pathway is secondary metabolite biosynthesis; terpenoid biosynthesis. Functionally, sesquiterpene synthase that catalyzes the formation of alpha- and beta-selinene from trans,trans-farnesyl diphosphate (FPP). Also produces some nerolidol. The sequence is that of Selinene synthase (SES) from Ocimum basilicum (Sweet basil).